The sequence spans 182 residues: NADH-quinone oxidoreductase subunit I (182 aa).

2 consecutive 4Fe-4S ferredoxin-type domains span residues 52–82 (LTRD…LQKA) and 92–121 (DFFR…LTPD). Positions 62, 65, 68, 72, 101, 104, 107, and 111 each coordinate [4Fe-4S] cluster.

It belongs to the complex I 23 kDa subunit family. As to quaternary structure, NDH-1 is composed of 13 different subunits. Subunits NuoA, H, J, K, L, M, N constitute the membrane sector of the complex. The cofactor is [4Fe-4S] cluster.

The protein localises to the cell inner membrane. It catalyses the reaction a quinone + NADH + 5 H(+)(in) = a quinol + NAD(+) + 4 H(+)(out). Its function is as follows. NDH-1 shuttles electrons from NADH, via FMN and iron-sulfur (Fe-S) centers, to quinones in the respiratory chain. The immediate electron acceptor for the enzyme in this species is believed to be ubiquinone. Couples the redox reaction to proton translocation (for every two electrons transferred, four hydrogen ions are translocated across the cytoplasmic membrane), and thus conserves the redox energy in a proton gradient. The protein is NADH-quinone oxidoreductase subunit I of Pseudomonas syringae pv. syringae (strain B728a).